Reading from the N-terminus, the 667-residue chain is WD40 repeat-containing protein DDB_G0271002 (667 aa).

WD repeat units follow at residues 165–204 (NHGVSTWGIAICPSKPLIAVSSNSHKITIWNLDDENPQET) and 210–249 (KHKHNIPSIDFSPCGNYLVSVSIDKNIRIWDVNKRQLLRI). Positions 278–293 (SSNSRDNNNNNSNSNN) are enriched in low complexity. Disordered regions lie at residues 278-301 (SSNSRDNNNNNSNSNNNGGGGIII), 316-345 (LVENNQEVEPMPEEEEEEEEEEVNQVDNDD), and 389-440 (DIIF…ATTT). Over residues 325 to 345 (PMPEEEEEEEEEEVNQVDNDD) the composition is skewed to acidic residues. Low complexity predominate over residues 400–410 (NQHQQQQQQNQ). The segment covering 411–428 (EIEEEGQEGQEEQEDGTE) has biased composition (acidic residues). The span at 429–440 (NENNQGTIATTT) shows a compositional bias: low complexity.

The chain is WD40 repeat-containing protein DDB_G0271002 from Dictyostelium discoideum (Social amoeba).